We begin with the raw amino-acid sequence, 287 residues long: 4-hydroxybenzoate octaprenyltransferase (287 aa).

Helical transmembrane passes span 21–41, 44–64, 91–111, 112–132, 139–159, 160–180, 211–231, 235–255, and 263–283; these read VGIF…AKGA, FKIA…GCIV, VTEA…LVLL, LNRL…VYPF, LPQL…FAAT, VGHV…WPIV, LMIG…GWYL, YWFY…QFLI, and CFAA…GILL.

It belongs to the UbiA prenyltransferase family. Requires Mg(2+) as cofactor.

Its subcellular location is the cell inner membrane. The catalysed reaction is all-trans-octaprenyl diphosphate + 4-hydroxybenzoate = 4-hydroxy-3-(all-trans-octaprenyl)benzoate + diphosphate. The protein operates within cofactor biosynthesis; ubiquinone biosynthesis. Its function is as follows. Catalyzes the prenylation of para-hydroxybenzoate (PHB) with an all-trans polyprenyl group. Mediates the second step in the final reaction sequence of ubiquinone-8 (UQ-8) biosynthesis, which is the condensation of the polyisoprenoid side chain with PHB, generating the first membrane-bound Q intermediate 3-octaprenyl-4-hydroxybenzoate. This Coxiella burnetii (strain CbuG_Q212) (Coxiella burnetii (strain Q212)) protein is 4-hydroxybenzoate octaprenyltransferase.